We begin with the raw amino-acid sequence, 83 residues long: Toxin To15 (83 aa).

A signal peptide spans 1 to 19 (MKGIILLISCLMLIEVVVG). The 62-residue stretch at 21-82 (KEGYPLDSSG…IWNAKTNKCY (62 aa)) folds into the LCN-type CS-alpha/beta domain. 4 disulfide bridges follow: Cys-31/Cys-81, Cys-35/Cys-57, Cys-43/Cys-62, and Cys-47/Cys-64.

This sequence belongs to the long (4 C-C) scorpion toxin superfamily. Sodium channel inhibitor family. Beta subfamily. As to expression, expressed by the venom gland.

Its subcellular location is the secreted. In terms of biological role, beta toxins bind voltage-independently at site-4 of sodium channels (Nav) and shift the voltage of activation toward more negative potentials thereby affecting sodium channel activation and promoting spontaneous and repetitive firing. This is Toxin To15 from Tityus obscurus (Amazonian scorpion).